The chain runs to 971 residues: Zinc finger CCCH domain-containing protein 7A (971 aa).

TPR repeat units lie at residues 43–76 (VRNL…ADYA), 89–122 (EKLY…NASN), and 124–156 (KALY…VPQD). A Phosphothreonine modification is found at threonine 210. 2 consecutive C3H1-type zinc fingers follow at residues 634 to 656 (LCRH…HSLV) and 769 to 797 (PLQF…HSPE). A C2H2-type zinc finger spans residues 857–881 (FHCWMCGKNCNSEKQWQGHISSEKH). The C3H1-type 3 zinc finger occupies 906-928 (ICDRYMNGTCPEGNSCKFAHGNA). Residues 924–952 (AHGNAELHEWEERRDALKMKLNKARKDHL) are a coiled coil.

Its subcellular location is the nucleus. In terms of biological role, may be a specific regulator of miRNA biogenesis. Binds to microRNAs MIR7-1, MIR16-2 and MIR29A hairpins recognizing the 3'-ATA(A/T)-5' motif in the apical loop. The chain is Zinc finger CCCH domain-containing protein 7A (ZC3H7A) from Homo sapiens (Human).